A 214-amino-acid polypeptide reads, in one-letter code: Adenylate kinase (214 aa).

10–15 contacts ATP; that stretch reads GAGKGT. An NMP region spans residues 30 to 59; that stretch reads STGDMFRDHKARGTELGKTVQAIMDAGGLV. AMP is bound by residues Thr31, Arg36, 57 to 59, 85 to 88, and Gln92; these read GLV and GYPR. The interval 126 to 163 is LID; that stretch reads GRRSCPKCGAVYHVSANPPRRMGYCDRDDAGLVQRDDD. Arg127 contacts ATP. Zn(2+) is bound by residues Cys130 and Cys133. Residue 136–137 participates in ATP binding; the sequence is VY. The Zn(2+) site is built by Cys150 and Asp153. Positions 160 and 171 each coordinate AMP. Position 199 (Gly199) interacts with ATP.

It belongs to the adenylate kinase family. Monomer.

The protein resides in the cytoplasm. The catalysed reaction is AMP + ATP = 2 ADP. The protein operates within purine metabolism; AMP biosynthesis via salvage pathway; AMP from ADP: step 1/1. Catalyzes the reversible transfer of the terminal phosphate group between ATP and AMP. Plays an important role in cellular energy homeostasis and in adenine nucleotide metabolism. The polypeptide is Adenylate kinase (Anaeromyxobacter sp. (strain Fw109-5)).